Reading from the N-terminus, the 117-residue chain is Large ribosomal subunit protein bL20 (117 aa).

This sequence belongs to the bacterial ribosomal protein bL20 family.

Its function is as follows. Binds directly to 23S ribosomal RNA and is necessary for the in vitro assembly process of the 50S ribosomal subunit. It is not involved in the protein synthesizing functions of that subunit. The protein is Large ribosomal subunit protein bL20 of Rickettsia akari (strain Hartford).